A 295-amino-acid polypeptide reads, in one-letter code: Pyridoxal 5'-phosphate synthase subunit PdxS (295 aa).

D-ribose 5-phosphate is bound at residue Asp-25. The active-site Schiff-base intermediate with D-ribose 5-phosphate is Lys-82. Gly-154 contributes to the D-ribose 5-phosphate binding site. Arg-166 is a binding site for D-glyceraldehyde 3-phosphate. D-ribose 5-phosphate contacts are provided by residues Gly-215 and 236-237 (GS).

This sequence belongs to the PdxS/SNZ family. In the presence of PdxT, forms a dodecamer of heterodimers.

The enzyme catalyses aldehydo-D-ribose 5-phosphate + D-glyceraldehyde 3-phosphate + L-glutamine = pyridoxal 5'-phosphate + L-glutamate + phosphate + 3 H2O + H(+). It functions in the pathway cofactor biosynthesis; pyridoxal 5'-phosphate biosynthesis. Its function is as follows. Catalyzes the formation of pyridoxal 5'-phosphate from ribose 5-phosphate (RBP), glyceraldehyde 3-phosphate (G3P) and ammonia. The ammonia is provided by the PdxT subunit. Can also use ribulose 5-phosphate and dihydroxyacetone phosphate as substrates, resulting from enzyme-catalyzed isomerization of RBP and G3P, respectively. In Actinobacillus pleuropneumoniae serotype 7 (strain AP76), this protein is Pyridoxal 5'-phosphate synthase subunit PdxS.